We begin with the raw amino-acid sequence, 724 residues long: Disks large homolog 4 (724 aa).

S-palmitoyl cysteine attachment occurs at residues cysteine 3 and cysteine 5. Residues 15-35 (QDEDTPPLEHSPAHLPNQANS) form a disordered region. PDZ domains follow at residues 65–151 (EITL…VMRR) and 160–246 (EIKL…VAKP). Serine 73 and serine 142 each carry phosphoserine. The residue at position 240 (tyrosine 240) is a Phosphotyrosine. Phosphoserine is present on serine 295. Positions 313 to 393 (RIVIHRGSTG…QTVTIIAQYK (81 aa)) constitute a PDZ 3 domain. Phosphoserine occurs at positions 415 and 418. Phosphothreonine is present on threonine 420. Residues serine 422, serine 425, serine 449, and serine 480 each carry the phosphoserine modification. Residues 428–498 (KRGFYIRALF…PSKRRVERRE (71 aa)) enclose the SH3 domain. In terms of domain architecture, Guanylate kinase-like spans 534 to 709 (ARPIIILGPT…IYHKVKRVIE (176 aa)). A Phosphotyrosine modification is found at tyrosine 580. Phosphoserine is present on residues serine 606 and serine 654. Tyrosine 715 bears the Phosphotyrosine mark.

This sequence belongs to the MAGUK family. As to quaternary structure, interacts through its PDZ domains with ANO2 and NETO1. Interacts with KCNJ4. Interacts through its first two PDZ domains with GRIN2A, GRIN2B, GRIN2C and GRIN2D. Interacts with ERBB4. Interacts with KCNA1, KCNA2, KCNA3 and KCNA4. Interacts with LRRC4 and LRRC4B. Interacts with SYNGAP1. Interacts with ASIC3. Interacts with SEMA4C. Interacts with CXADR. Interacts with KCND2. Interacts (via first PDZ domain) with CRIPT. Interacts through its first PDZ domain with GRIK2 and KCNA4. Interacts through its second PDZ domain with the PDZ domain of NOS1 or the C-terminus of CAPON. Interacts through its third PDZ domain with NLGN1 and CRIPT, and probably with NLGN2 and NLGN3. Interacts through its guanylate kinase-like domain with DLGAP1/GKAP, DLGAP2, DLGAP3, DLGAP4, MAP1A, BEGAIN and SIPA1L1. Interacts through its guanylate kinase-like domain with KIF13B. Isoform 2 interacts through an L27 domain with HGS/HRS and the first L27 domain of CASK. Interacts with ANKS1B. Interacts with ADR1B. May interact with HTR2A. Interacts with ADAM22, KLHL17 and LGI1. Interacts with FRMPD4 (via C-terminus). Interacts with LRFN1 and LRFN2. Interacts with LRFN4. Interacts (via N-terminal tandem pair of PDZ domains) with GPER1 (via C-terminus tail motif); the interaction is direct and induces the increase of GPER1 protein levels residing at the plasma membrane surface in a estradiol-independent manner. Interacts (via N-terminus tandem pair of PDZ domains) with NOS1 (via N-terminal domain). Interacts with SHANK3. Interacts with GPR85. Interacts with CACNG2 and MPP2 (via the SH3-Guanylate kinase-like sub-module). Interacts with ADGRB1. Found in a complex with PRR7 and GRIN1. Interacts (via PDZ3 domain and to lesser degree via PDZ2 domain) with PRR7. Component of the postsynaptic hippocampal AMPA-type glutamate receptor (AMPAR) complex, at least composed of pore forming AMPAR subunits GRIA1, GRIA2 and GRIA3 and AMPAR auxiliary proteins SHISA6 and SHISA7. Interacts (via its first two PDZ domains) with SHISA6 and SHISA7 (via PDZ-binding motif); the interaction is direct. Interacts (via PDZ domain 2) with SEMA4F (via PDZ-binding motif); this interaction may promote translocation of DLG4/SAP90 to the membrane. Interacts with RPH3A and GRIN2A; this ternary complex regulates NMDA receptor composition at postsynaptic membranes. Interacts with ABR and BCR. Interacts with DGKI (via PDZ-binding motif); controls the localization of DGKI to the synapse. Interacts with C9orf72, SMCR8 and RAB39B. Interacts with ZDHHC5. Interacts with PTEN (via PDZ domain-binding motif); the interaction is induced by NMDA and is required for PTEN location at postsynaptic density. Found in a complex with GRIA1, GRIA2, GRIA3, GRIA4, CACNG8 and CNIH2. Interacts with FAM81A; the interaction facilitates condensate formation via liquid-liquid phase separation. Interacts with ADGRL3. Interacts with SORCS3. In terms of processing, palmitoylated. Palmitoylation is required for targeting to postsynaptic density, plasma membrane and synapses. Palmitoylation by ZDHHC2 occurs when the synaptic activity decreases and induces DLG4 synaptic clustering. Palmitoylation by ZDHHC15 regulates trafficking to the postsynaptic density and function in synaptogenesis. Palmitoylation may play a role in glutamate receptor GRIA1 synapse clustering. Depalmitoylated by ABHD17A and ABHD17B and to a lesser extent by ABHD17C, ABHD12, ABHD13, LYPLA1 and LYPLA2. Undergoes rapid synaptic palmitoylation/depalmitoylation cycle during neuronal development which slows down in mature neurons. Post-translationally, ubiquitinated by MDM2 in response to NMDA receptor activation, leading to proteasome-mediated degradation of DLG4 which is required for AMPA receptor endocytosis. In terms of tissue distribution, expressed in brain (at protein level). Detected in juxtaparanodal zones in the central nervous system and at nerve terminal plexuses of basket cells in the cerebellum. Expressed in cerebrum. Expressed in hippocampal neurons (at protein level). Isoform 1 and isoform 2: highly expressed in cerebellum, cortex, hippocampus, and corpus striatum.

It localises to the cell membrane. Its subcellular location is the postsynaptic density. The protein localises to the synapse. The protein resides in the cytoplasm. It is found in the cell projection. It localises to the axon. Its subcellular location is the dendritic spine. The protein localises to the dendrite. The protein resides in the presynapse. Postsynaptic scaffolding protein that plays a critical role in synaptogenesis and synaptic plasticity by providing a platform for the postsynaptic clustering of crucial synaptic proteins. Interacts with the cytoplasmic tail of NMDA receptor subunits and shaker-type potassium channels. Required for synaptic plasticity associated with NMDA receptor signaling. Overexpression or depletion of DLG4 changes the ratio of excitatory to inhibitory synapses in hippocampal neurons. May reduce the amplitude of ASIC3 acid-evoked currents by retaining the channel intracellularly. May regulate the intracellular trafficking of ADR1B. Also regulates AMPA-type glutamate receptor (AMPAR) immobilization at postsynaptic density keeping the channels in an activated state in the presence of glutamate and preventing synaptic depression. Under basal conditions, cooperates with FYN to stabilize palmitoyltransferase ZDHHC5 at the synaptic membrane through FYN-mediated phosphorylation of ZDHHC5 and its subsequent inhibition of association with endocytic proteins. In Rattus norvegicus (Rat), this protein is Disks large homolog 4.